The following is a 566-amino-acid chain: Peroxisomal targeting signal receptor (566 aa).

Residue Cys-5 forms a Glycyl cysteine thioester (Cys-Gly) (interchain with G-Cter in ubiquitin) linkage. The amphipathic helix 1 (AH1) stretch occupies residues 6–28; that stretch reads SVGSNPLAQLNKHAQQNPALRQV. A Glycyl lysine isopeptide (Lys-Gly) (interchain with G-Cter in ubiquitin) cross-link involves residue Lys-17. An amphipathic helix 2 (AH2) region spans residues 53–71; sequence RFQMDQFMNRSPGFSDGQL. A disordered region spans residues 88-159; the sequence is GLKKQDSGSS…IGRPMMHTGI (72 aa). A compositionally biased stretch (polar residues) spans 94–142; that stretch reads SGSSNMSAGDTAQHSRSWGNEFNSRSPQQGLASRVNNVERISNTNSMSS. The short motif at 111–115 is the WxxxF/Y motif 1 element; that stretch reads WGNEF. An amphipathic helix 3 (AH3) region spans residues 145–151; it reads PGMSRIG. The WxxxF/Y motif 2 motif lies at 187–191; it reads WNEQF. Residues 225 to 241 form an amphipathic helix 4 (AH4) region; the sequence is FQEVWDKLQAETADNNL. Positions 248–252 match the WxxxF/Y motif 3 motif; the sequence is WEKDY. TPR repeat units follow at residues 277–311, 312–345, 416–449, 451–483, and 485–517; these read NPNA…DPAH, VDAW…DPTN, PEVQ…NPND, LMWN…KPSF, and RARY…HEVE.

This sequence belongs to the peroxisomal targeting signal receptor family. Interacts (via WxxxF/Y and LVxEF motifs) with PEX14; promoting translocation through the PEX13-PEX14 docking complex. Post-translationally, monoubiquitinated at Cys-5 by PEX2 during PEX5 passage through the retrotranslocation channel: monoubiquitination acts as a signal for PEX5 extraction and is required for proper export from peroxisomes and recycling. When PEX5 recycling is compromised, polyubiquitinated at Lys-17 by PEX10 during its passage through the retrotranslocation channel, leading to its degradation.

It localises to the cytoplasm. The protein localises to the cytosol. It is found in the peroxisome matrix. Receptor that mediates peroxisomal import of proteins containing a C-terminal PTS1-type tripeptide peroxisomal targeting signal (SKL-type). Binds to cargo proteins containing a PTS1 peroxisomal targeting signal in the cytosol, and translocates them into the peroxisome matrix by passing through the PEX13-PEX14 docking complex along with cargo proteins. PEX5 receptor is then retrotranslocated into the cytosol, leading to release of bound cargo in the peroxisome matrix, and reset for a subsequent peroxisome import cycle. This chain is Peroxisomal targeting signal receptor (PEX5), found in Kluyveromyces lactis (strain ATCC 8585 / CBS 2359 / DSM 70799 / NBRC 1267 / NRRL Y-1140 / WM37) (Yeast).